The primary structure comprises 370 residues: 3-isopropylmalate dehydrogenase (370 aa).

77–90 (GPKWDGVPYEHRPE) is a binding site for NAD(+). R97, R107, R135, and D226 together coordinate substrate. D226, D250, and D254 together coordinate Mg(2+). 290-302 (GSAPDIAGKSIAN) lines the NAD(+) pocket.

It belongs to the isocitrate and isopropylmalate dehydrogenases family. LeuB type 1 subfamily. As to quaternary structure, homodimer. It depends on Mg(2+) as a cofactor. The cofactor is Mn(2+).

The protein resides in the cytoplasm. It catalyses the reaction (2R,3S)-3-isopropylmalate + NAD(+) = 4-methyl-2-oxopentanoate + CO2 + NADH. It participates in amino-acid biosynthesis; L-leucine biosynthesis; L-leucine from 3-methyl-2-oxobutanoate: step 3/4. Its function is as follows. Catalyzes the oxidation of 3-carboxy-2-hydroxy-4-methylpentanoate (3-isopropylmalate) to 3-carboxy-4-methyl-2-oxopentanoate. The product decarboxylates to 4-methyl-2 oxopentanoate. The polypeptide is 3-isopropylmalate dehydrogenase (leuB) (Agrobacterium fabrum (strain C58 / ATCC 33970) (Agrobacterium tumefaciens (strain C58))).